The sequence spans 510 residues: Probable inositol 3-phosphate synthase isozyme 3 (510 aa).

Belongs to the myo-inositol 1-phosphate synthase family. The cofactor is NAD(+). Expressed in siliques, leaves, roots, seed endosperm, but not in embryos. Highest expression in roots. Confined to vascular tissue and hydathodes of leaves.

It is found in the cytoplasm. It catalyses the reaction D-glucose 6-phosphate = 1D-myo-inositol 3-phosphate. It participates in polyol metabolism; myo-inositol biosynthesis; myo-inositol from D-glucose 6-phosphate: step 1/2. Key enzyme in myo-inositol biosynthesis pathway that catalyzes the conversion of glucose 6-phosphate to 1-myo-inositol 1-phosphate in a NAD-dependent manner. The chain is Probable inositol 3-phosphate synthase isozyme 3 (IPS3) from Arabidopsis thaliana (Mouse-ear cress).